The sequence spans 527 residues: Flagellar radial spoke protein 5 (527 aa).

The tract at residues 1 to 22 (MSEPGEEPVAAPAGPAPDPVLN) is disordered. Positions 101-153 (RKWNELTIQAKQLEQEVAGLKGPDAEAKQAELENVKVQIADAEAAVAEVKQSF) form a coiled coil. R191 and R366 each carry asymmetric dimethylarginine.

It belongs to the aldo/keto reductase family. In terms of processing, asymmetrically dimethylated at Arg-191 and Arg-366 during flagellum resorption. Probably methylated by PRMT1.

The protein resides in the cytoplasm. The protein localises to the cytoskeleton. Its subcellular location is the flagellum axoneme. Functionally, flagellar radial spokes contribute to the regulation of dynein arm activity and thus the pattern of flagellar bending. They consist of a thin stalk, which is attached to the a subfiber of the outer doublet microtubule, and a bulbous head, which is attached to the stalk and appears to interact with the projections from the central pair of microtubules. In Chlamydomonas reinhardtii (Chlamydomonas smithii), this protein is Flagellar radial spoke protein 5.